The sequence spans 152 residues: Ribosome maturation factor RimP (152 aa).

The protein belongs to the RimP family.

Its subcellular location is the cytoplasm. Its function is as follows. Required for maturation of 30S ribosomal subunits. In Escherichia coli (strain K12 / MC4100 / BW2952), this protein is Ribosome maturation factor RimP.